Consider the following 430-residue polypeptide: MAERVLDKLDILDEQAKTLLATRAKKNCLQSQVKRKISVIPLTFDFQLELEKDIATSISKTNSKITKDRSYGTKKPKRYVSFKNMPEPKKSDFQNSNLRPPFLPTNIKTQEIKSIEPVEEYLKSRSIRSFHYLKDIPETEYAKPFQELYSQHRHQCRRTLCSTVFSSVPSNQSHAYKKEDSIYSTKENESIRNDQLNEYSVRQKSLLPLCFEDELIKPDAKIIDIGLVKTVTSHTGKNDTNPIMFHEAGYVQMLLLTKNRLPPHFMKNGNGSPYERSNVVLQRNCEMLKSVARDQSITPSKTQRTLPTTQKKDIPAISFKVSDRVVDDKLRKKTRKQTFKNISWDKLYNFSQTFSSLTKKFVGFLDKTVIQEMSAKTGKFEKMFSTVKPVSEFSASPFKYYSKPSRNILKVHKINNVTPLDDLLNLSSKK.

This is an uncharacterized protein from Bos taurus (Bovine).